We begin with the raw amino-acid sequence, 220 residues long: Deoxyribose-phosphate aldolase (220 aa).

Aspartate 92 (proton donor/acceptor) is an active-site residue. The active-site Schiff-base intermediate with acetaldehyde is lysine 157. Residue lysine 186 is the Proton donor/acceptor of the active site.

It belongs to the DeoC/FbaB aldolase family. DeoC type 1 subfamily.

Its subcellular location is the cytoplasm. It carries out the reaction 2-deoxy-D-ribose 5-phosphate = D-glyceraldehyde 3-phosphate + acetaldehyde. It participates in carbohydrate degradation; 2-deoxy-D-ribose 1-phosphate degradation; D-glyceraldehyde 3-phosphate and acetaldehyde from 2-deoxy-alpha-D-ribose 1-phosphate: step 2/2. Functionally, catalyzes a reversible aldol reaction between acetaldehyde and D-glyceraldehyde 3-phosphate to generate 2-deoxy-D-ribose 5-phosphate. In Caldicellulosiruptor saccharolyticus (strain ATCC 43494 / DSM 8903 / Tp8T 6331), this protein is Deoxyribose-phosphate aldolase.